The sequence spans 1023 residues: Sodium/potassium-transporting ATPase subunit alpha-1 (1023 aa).

The propeptide occupies 1 to 5 (MGKGV). Basic and acidic residues predominate over residues 1-11 (MGKGVGRDKYE). Residues 1–38 (MGKGVGRDKYEPAAVSEHGDKKGKKAKKERDMDELKKE) form a disordered region. Over 6–87 (GRDKYEPAAV…NALTPPPTTP (82 aa)) the chain is Cytoplasmic. Position 9 is an N6-acetyllysine (lysine 9). At tyrosine 10 the chain carries Phosphotyrosine. Serine 16 bears the Phosphoserine; by PKC mark. Lysine 21 bears the N6-acetyllysine mark. The segment covering 28-38 (KERDMDELKKE) has biased composition (basic and acidic residues). Serine 40 and serine 47 each carry phosphoserine. Residues 82–84 (PPP) form a phosphoinositide-3 kinase binding region. A helical transmembrane segment spans residues 88–108 (EWVKFCRQLFGGFSMLLWIGA). Residues 109–131 (ILCFLAYGILAATEEDFDNDNLY) lie on the Extracellular side of the membrane. Residues 132-152 (LGVVLAAVVIITGCFSYYQEA) form a helical membrane-spanning segment. At 153–288 (KSSKIMESFK…GGQTPIAAEI (136 aa)) the chain is on the cytoplasmic side. Positions 216–235 (SSLTGESEPQTRSPDFTNEN) are disordered. Serine 228 carries the post-translational modification Phosphoserine. Tyrosine 260 carries the phosphotyrosine modification. A helical transmembrane segment spans residues 289–308 (EHFIHIITGVAVFLGVSFFI). Over 309-320 (LSLILEYTWLEA) the chain is Extracellular. The helical transmembrane segment at 321 to 338 (VIFLIGIIVANVPEGLLA) threads the bilayer. The Cytoplasmic segment spans residues 339–772 (TVTVCLTLTA…EEGRLIFDNL (434 aa)). The active-site 4-aspartylphosphate intermediate is the aspartate 376. A phosphoserine mark is found at serine 452 and serine 484. Lysine 487 contributes to the ATP binding site. Tyrosine 542 carries the post-translational modification Phosphotyrosine. Positions 596-717 (RAAVPDAVGK…QGAIVAVTGD (122 aa)) are mediates interaction with SCN7A. N6-succinyllysine is present on lysine 661. A phosphoserine mark is found at serine 668 and serine 675. 2 residues coordinate Mg(2+): aspartate 717 and aspartate 721. The helical transmembrane segment at 773-792 (KKSIAYTLTSNIPEITPFLI) threads the bilayer. Topologically, residues 793-802 (FIIANIPLPL) are extracellular. Residues 803 to 823 (GTVTILCIDLGTDMVPAISLA) form a helical membrane-spanning segment. Residues 824–843 (YEQAESDIMKRQPRNPKTDK) are Cytoplasmic-facing. The helical transmembrane segment at 844–866 (LVNERLISMAYGQIGMIQALGGF) threads the bilayer. The Extracellular segment spans residues 867–918 (FTYFVILAENGFLPFHLLGIRVDWDDRWINDVEDSYGQQWTYEQRKIVEFTC). Residues 919–938 (HTAFFVSIVVVQWADLVICK) traverse the membrane as a helical segment. Residues 939–951 (TRRNSVFQQGMKN) lie on the Cytoplasmic side of the membrane. Serine 943 is modified (phosphoserine; by PKA). Residues 952-970 (KILIFGLFEETALAAFLSY) traverse the membrane as a helical segment. Topologically, residues 971-985 (CPGMGVALRMYPLKP) are extracellular. The helical transmembrane segment at 986 to 1006 (TWWFCAFPYSLLIFVYDEIRK) threads the bilayer. Topologically, residues 1007–1023 (LIIRRRPGGWVEKETYY) are cytoplasmic.

Belongs to the cation transport ATPase (P-type) (TC 3.A.3) family. Type IIC subfamily. In terms of assembly, the sodium/potassium-transporting ATPase is composed of a catalytic alpha subunit, an auxiliary non-catalytic beta subunit and an additional regulatory subunit. Interacts with regulatory subunit FXYD1. Interacts with regulatory subunit FXYD3. Interacts with SIK1. Interacts with SLC35G1 and STIM1. Interacts with CLN3; this interaction regulates the sodium/potassium-transporting ATPase complex localization at the plasma membrane. Interacts with SCN7A; activates ATP1A1 P-type sodium:potassium-exchanging transporter activity which indirectly signals to nearby neurons to regulate sodium homeostasis. Post-translationally, phosphorylation on Tyr-10 modulates pumping activity. Phosphorylation of Ser-943 by PKA modulates the response of ATP1A1 to PKC. Dephosphorylation by protein phosphatase 2A (PP2A) following increases in intracellular sodium, leading to increase catalytic activity. As to expression, expressed in endocardial endothelial cells.

It localises to the cell membrane. The protein resides in the basolateral cell membrane. The protein localises to the sarcolemma. Its subcellular location is the cell projection. It is found in the axon. It localises to the melanosome. It carries out the reaction K(+)(out) + Na(+)(in) + ATP + H2O = K(+)(in) + Na(+)(out) + ADP + phosphate + H(+). Its function is as follows. This is the catalytic component of the active enzyme, which catalyzes the hydrolysis of ATP coupled with the exchange of sodium and potassium ions across the plasma membrane. This action creates the electrochemical gradient of sodium and potassium ions, providing the energy for active transport of various nutrients. Could also be part of an osmosensory signaling pathway that senses body-fluid sodium levels and controls salt intake behavior as well as voluntary water intake to regulate sodium homeostasis. The sequence is that of Sodium/potassium-transporting ATPase subunit alpha-1 (ATP1A1) from Oryctolagus cuniculus (Rabbit).